The chain runs to 643 residues: Phosphomethylpyrimidine synthase (643 aa).

Substrate-binding positions include asparagine 248, methionine 277, tyrosine 306, histidine 342, 362–364 (SRG), 403–406 (DGLR), and glutamate 442. Histidine 446 contributes to the Zn(2+) binding site. Residue tyrosine 469 coordinates substrate. Histidine 510 lines the Zn(2+) pocket. [4Fe-4S] cluster is bound by residues cysteine 590, cysteine 593, and cysteine 598.

This sequence belongs to the ThiC family. Homodimer. It depends on [4Fe-4S] cluster as a cofactor.

It catalyses the reaction 5-amino-1-(5-phospho-beta-D-ribosyl)imidazole + S-adenosyl-L-methionine = 4-amino-2-methyl-5-(phosphooxymethyl)pyrimidine + CO + 5'-deoxyadenosine + formate + L-methionine + 3 H(+). It participates in cofactor biosynthesis; thiamine diphosphate biosynthesis. Its function is as follows. Catalyzes the synthesis of the hydroxymethylpyrimidine phosphate (HMP-P) moiety of thiamine from aminoimidazole ribotide (AIR) in a radical S-adenosyl-L-methionine (SAM)-dependent reaction. In Burkholderia ambifaria (strain ATCC BAA-244 / DSM 16087 / CCUG 44356 / LMG 19182 / AMMD) (Burkholderia cepacia (strain AMMD)), this protein is Phosphomethylpyrimidine synthase.